Consider the following 291-residue polypeptide: Small ribosomal subunit biogenesis GTPase RsgA (291 aa).

The 159-residue stretch at 63 to 221 folds into the CP-type G domain; sequence HNELKRPPVS…IADTPGFSAL (159 aa). GTP-binding positions include 112–115 and 164–172; these read TKKD and GQSGVGKST. Zn(2+) contacts are provided by C245, C250, H252, and C258.

The protein belongs to the TRAFAC class YlqF/YawG GTPase family. RsgA subfamily. In terms of assembly, monomer. Associates with 30S ribosomal subunit, binds 16S rRNA. It depends on Zn(2+) as a cofactor.

The protein localises to the cytoplasm. One of several proteins that assist in the late maturation steps of the functional core of the 30S ribosomal subunit. Helps release RbfA from mature subunits. May play a role in the assembly of ribosomal proteins into the subunit. Circularly permuted GTPase that catalyzes slow GTP hydrolysis, GTPase activity is stimulated by the 30S ribosomal subunit. This chain is Small ribosomal subunit biogenesis GTPase RsgA, found in Staphylococcus haemolyticus (strain JCSC1435).